The sequence spans 284 residues: Tropomyosin (284 aa).

Residues 1–41 (MDAIKKKMQAMKLEKDNAVDRAETAEQQSRDAALRAEKAEE) are disordered. Positions 1-284 (MDAIKKKMQA…DQTFSELTGY (284 aa)) form a coiled coil. Over residues 12–41 (KLEKDNAVDRAETAEQQSRDAALRAEKAEE) the composition is skewed to basic and acidic residues.

It belongs to the tropomyosin family. As to quaternary structure, homodimer.

In terms of biological role, tropomyosin, in association with the troponin complex, plays a central role in the calcium dependent regulation of muscle contraction. The protein is Tropomyosin of Haemaphysalis longicornis (Bush tick).